We begin with the raw amino-acid sequence, 211 residues long: Histone H1-beta, late embryonic (211 aa).

Disordered regions lie at residues 1-22 (MAAE…PSSS) and 81-211 (KGAS…AAKK). The 75-residue stretch at 17–91 (AHPSSSEMVL…GASGSFKLGK (75 aa)) folds into the H15 domain. 2 stretches are compositionally biased toward basic and acidic residues: residues 95–107 (GKSD…DAAK) and 114–123 (KKKEAKEKKA). Composition is skewed to basic residues over residues 124–177 (ARSK…KKAA) and 185–211 (KAAK…AAKK).

It belongs to the histone H1/H5 family.

It is found in the nucleus. It localises to the chromosome. Histones H1 are necessary for the condensation of nucleosome chains into higher-order structures. This chain is Histone H1-beta, late embryonic, found in Strongylocentrotus purpuratus (Purple sea urchin).